The primary structure comprises 262 residues: Glutamate racemase (262 aa).

Substrate is bound by residues 5-6 and 37-38; these read DS and YG. The Proton donor/acceptor role is filled by cysteine 69. 70-71 serves as a coordination point for substrate; it reads NT. Cysteine 181 functions as the Proton donor/acceptor in the catalytic mechanism. 182–183 lines the substrate pocket; that stretch reads TH.

It belongs to the aspartate/glutamate racemases family.

It carries out the reaction L-glutamate = D-glutamate. Its pathway is cell wall biogenesis; peptidoglycan biosynthesis. Its function is as follows. Provides the (R)-glutamate required for cell wall biosynthesis. The polypeptide is Glutamate racemase (Buchnera aphidicola subsp. Acyrthosiphon pisum (strain APS) (Acyrthosiphon pisum symbiotic bacterium)).